The sequence spans 88 residues: DNA-directed RNA polymerase subunit omega (88 aa).

It belongs to the RNA polymerase subunit omega family. As to quaternary structure, the RNAP catalytic core consists of 2 alpha, 1 beta, 1 beta' and 1 omega subunit. When a sigma factor is associated with the core the holoenzyme is formed, which can initiate transcription.

It catalyses the reaction RNA(n) + a ribonucleoside 5'-triphosphate = RNA(n+1) + diphosphate. Promotes RNA polymerase assembly. Latches the N- and C-terminal regions of the beta' subunit thereby facilitating its interaction with the beta and alpha subunits. This Salinispora arenicola (strain CNS-205) protein is DNA-directed RNA polymerase subunit omega.